We begin with the raw amino-acid sequence, 311 residues long: Aspartate carbamoyltransferase catalytic subunit (311 aa).

Carbamoyl phosphate contacts are provided by arginine 55 and threonine 56. Lysine 83 is an L-aspartate binding site. Carbamoyl phosphate-binding residues include arginine 105, histidine 133, and glutamine 136. Positions 166 and 220 each coordinate L-aspartate. Glycine 261 and proline 262 together coordinate carbamoyl phosphate.

The protein belongs to the aspartate/ornithine carbamoyltransferase superfamily. ATCase family. In terms of assembly, heterododecamer (2C3:3R2) of six catalytic PyrB chains organized as two trimers (C3), and six regulatory PyrI chains organized as three dimers (R2).

The enzyme catalyses carbamoyl phosphate + L-aspartate = N-carbamoyl-L-aspartate + phosphate + H(+). It functions in the pathway pyrimidine metabolism; UMP biosynthesis via de novo pathway; (S)-dihydroorotate from bicarbonate: step 2/3. Catalyzes the condensation of carbamoyl phosphate and aspartate to form carbamoyl aspartate and inorganic phosphate, the committed step in the de novo pyrimidine nucleotide biosynthesis pathway. In Chlorobium chlorochromatii (strain CaD3), this protein is Aspartate carbamoyltransferase catalytic subunit.